The following is a 598-amino-acid chain: Auxin response factor 22 (598 aa).

Positions 124–226 (NSFTKVLTAS…ELRVGIRRAG (103 aa)) form a DNA-binding region, TF-B3. The PB1 domain occupies 509–590 (RTCTKVQMQG…MVKKILIFKR (82 aa)).

It belongs to the ARF family. Homodimers and heterodimers.

It localises to the nucleus. In terms of biological role, auxin response factors (ARFs) are transcriptional factors that bind specifically to the DNA sequence 5'-TGTCTC-3' found in the auxin-responsive promoter elements (AuxREs). Could act as transcriptional activator or repressor. Formation of heterodimers with Aux/IAA proteins may alter their ability to modulate early auxin response genes expression. This is Auxin response factor 22 (ARF22) from Arabidopsis thaliana (Mouse-ear cress).